A 404-amino-acid polypeptide reads, in one-letter code: Nicotinate phosphoribosyltransferase (404 aa).

Histidine 224 is modified (phosphohistidine; by autocatalysis).

This sequence belongs to the NAPRTase family. Transiently phosphorylated on a His residue during the reaction cycle. Phosphorylation strongly increases the affinity for substrates and increases the rate of nicotinate D-ribonucleotide production. Dephosphorylation regenerates the low-affinity form of the enzyme, leading to product release.

It catalyses the reaction nicotinate + 5-phospho-alpha-D-ribose 1-diphosphate + ATP + H2O = nicotinate beta-D-ribonucleotide + ADP + phosphate + diphosphate. It functions in the pathway cofactor biosynthesis; NAD(+) biosynthesis; nicotinate D-ribonucleotide from nicotinate: step 1/1. Catalyzes the synthesis of beta-nicotinate D-ribonucleotide from nicotinate and 5-phospho-D-ribose 1-phosphate at the expense of ATP. The protein is Nicotinate phosphoribosyltransferase of Photorhabdus laumondii subsp. laumondii (strain DSM 15139 / CIP 105565 / TT01) (Photorhabdus luminescens subsp. laumondii).